We begin with the raw amino-acid sequence, 220 residues long: Ribosomal RNA large subunit methyltransferase E (220 aa).

The S-adenosyl-L-methionine site is built by Gly-60, Trp-62, Asp-92, Asp-108, and Asp-133. The active-site Proton acceptor is the Lys-173. The segment at 195 to 220 is disordered; sequence APRKPKASRDKSSETFILGRHLKQPR.

It belongs to the class I-like SAM-binding methyltransferase superfamily. RNA methyltransferase RlmE family.

It localises to the cytoplasm. The enzyme catalyses uridine(2552) in 23S rRNA + S-adenosyl-L-methionine = 2'-O-methyluridine(2552) in 23S rRNA + S-adenosyl-L-homocysteine + H(+). Its function is as follows. Specifically methylates the uridine in position 2552 of 23S rRNA at the 2'-O position of the ribose in the fully assembled 50S ribosomal subunit. This Burkholderia pseudomallei (strain 1710b) protein is Ribosomal RNA large subunit methyltransferase E.